The following is an 81-amino-acid chain: Sulfur carrier protein TusA (81 aa).

Residue C19 is the Cysteine persulfide intermediate of the active site.

It belongs to the sulfur carrier protein TusA family.

Its subcellular location is the cytoplasm. In terms of biological role, sulfur carrier protein which probably makes part of a sulfur-relay system. The sequence is that of Sulfur carrier protein TusA from Vibrio vulnificus (strain CMCP6).